We begin with the raw amino-acid sequence, 158 residues long: Cyclic pyranopterin monophosphate synthase (158 aa).

Residues 74 to 76 (MCH) and 112 to 113 (ME) each bind substrate. D127 is a catalytic residue.

This sequence belongs to the MoaC family. Homohexamer; trimer of dimers.

It carries out the reaction (8S)-3',8-cyclo-7,8-dihydroguanosine 5'-triphosphate = cyclic pyranopterin phosphate + diphosphate. It participates in cofactor biosynthesis; molybdopterin biosynthesis. Its function is as follows. Catalyzes the conversion of (8S)-3',8-cyclo-7,8-dihydroguanosine 5'-triphosphate to cyclic pyranopterin monophosphate (cPMP). The chain is Cyclic pyranopterin monophosphate synthase from Thermoanaerobacter sp. (strain X514).